The primary structure comprises 302 residues: Oxygen-dependent coproporphyrinogen-III oxidase (302 aa).

Serine 94 lines the substrate pocket. A divalent metal cation contacts are provided by histidine 98 and histidine 108. Residue histidine 108 is the Proton donor of the active site. Substrate is bound at residue 110-112 (NVR). Residues histidine 147 and histidine 177 each coordinate a divalent metal cation. Positions 242-277 (YVEFNLVYDRGTLFGLQTGGRTESILMSMPPLVRWQ) are important for dimerization. 260–262 (GGR) provides a ligand contact to substrate.

The protein belongs to the aerobic coproporphyrinogen-III oxidase family. In terms of assembly, homodimer. A divalent metal cation is required as a cofactor.

The protein resides in the cytoplasm. It carries out the reaction coproporphyrinogen III + O2 + 2 H(+) = protoporphyrinogen IX + 2 CO2 + 2 H2O. The protein operates within porphyrin-containing compound metabolism; protoporphyrin-IX biosynthesis; protoporphyrinogen-IX from coproporphyrinogen-III (O2 route): step 1/1. Involved in the heme biosynthesis. Catalyzes the aerobic oxidative decarboxylation of propionate groups of rings A and B of coproporphyrinogen-III to yield the vinyl groups in protoporphyrinogen-IX. The polypeptide is Oxygen-dependent coproporphyrinogen-III oxidase (Shewanella oneidensis (strain ATCC 700550 / JCM 31522 / CIP 106686 / LMG 19005 / NCIMB 14063 / MR-1)).